Reading from the N-terminus, the 125-residue chain is Gem-associated protein 7 (125 aa).

The residue at position 1 (methionine 1) is an N-acetylmethionine. The region spanning 1 to 29 (MQTPLATPVPVLRLPRGPDGSNRGFAPDG) is the SUZ-C domain. The segment at 1-52 (MQTPLATPVPVLRLPRGPDGSNRGFAPDGRRAPPKPEVPEPPESRESWEQQA) is disordered. Threonine 3 is modified (phosphothreonine). One can recognise a Sm domain in the interval 59 to 125 (RYLRSLLAMV…SDIISYTFKP (67 aa)).

Belongs to the gemin-7 family. In terms of assembly, part of the core SMN complex that contains SMN1, GEMIN2/SIP1, DDX20/GEMIN3, GEMIN4, GEMIN5, GEMIN6, GEMIN7, GEMIN8 and STRAP/UNRIP. Part of the SMN-Sm complex that contains SMN1, GEMIN2/SIP1, DDX20/GEMIN3, GEMIN4, GEMIN5, GEMIN6, GEMIN7, GEMIN8, STRAP/UNRIP and the Sm proteins SNRPB, SNRPD1, SNRPD2, SNRPD3, SNRPE, SNRPF and SNRPG. Interacts with GEMIN6; the interaction is direct. Interacts with STRAP/UNRIP; the interaction is direct. Interacts with GEMIN8; the interaction is direct. Interacts with SNRPB, SNRPD2, SNRPD3 and SNRPE; the interaction is direct.

It localises to the nucleus. The protein resides in the nucleoplasm. The protein localises to the gem. It is found in the cytoplasm. In terms of biological role, the SMN complex catalyzes the assembly of small nuclear ribonucleoproteins (snRNPs), the building blocks of the spliceosome, and thereby plays an important role in the splicing of cellular pre-mRNAs. Most spliceosomal snRNPs contain a common set of Sm proteins SNRPB, SNRPD1, SNRPD2, SNRPD3, SNRPE, SNRPF and SNRPG that assemble in a heptameric protein ring on the Sm site of the small nuclear RNA to form the core snRNP (Sm core). In the cytosol, the Sm proteins SNRPD1, SNRPD2, SNRPE, SNRPF and SNRPG are trapped in an inactive 6S pICln-Sm complex by the chaperone CLNS1A that controls the assembly of the core snRNP. To assemble core snRNPs, the SMN complex accepts the trapped 5Sm proteins from CLNS1A forming an intermediate. Binding of snRNA inside 5Sm triggers eviction of the SMN complex, thereby allowing binding of SNRPD3 and SNRPB to complete assembly of the core snRNP. This Bos taurus (Bovine) protein is Gem-associated protein 7 (GEMIN7).